Here is a 558-residue protein sequence, read N- to C-terminus: 2-isopropylmalate synthase (558 aa).

Residues 31–305 form the Pyruvate carboxyltransferase domain; sequence PRWCSTDLRD…YPNLDFSDMR (275 aa). D40, H244, H246, and N280 together coordinate Mg(2+). Positions 439-558 are regulatory domain; sequence NPDDKGQMKL…NACHPLYKEA (120 aa).

The protein belongs to the alpha-IPM synthase/homocitrate synthase family. LeuA type 2 subfamily. As to quaternary structure, homodimer. Mg(2+) is required as a cofactor.

It localises to the cytoplasm. The enzyme catalyses 3-methyl-2-oxobutanoate + acetyl-CoA + H2O = (2S)-2-isopropylmalate + CoA + H(+). Its pathway is amino-acid biosynthesis; L-leucine biosynthesis; L-leucine from 3-methyl-2-oxobutanoate: step 1/4. In terms of biological role, catalyzes the condensation of the acetyl group of acetyl-CoA with 3-methyl-2-oxobutanoate (2-ketoisovalerate) to form 3-carboxy-3-hydroxy-4-methylpentanoate (2-isopropylmalate). The sequence is that of 2-isopropylmalate synthase from Marinomonas sp. (strain MWYL1).